A 438-amino-acid chain; its full sequence is MSMDIIKGNLDGISKPASSSRSRPGSRSSNGSLEVLSPEPGPVKIDMVNKLNSGKEGHTSDSRVEERRKISDDEWADNPRSTEPAQESSDEDSNLSQPQGTPEHSDDPKLEGTDAVLQNAIHKMHRLDKILAKRRIREKEIKKQGLEMRIKLWEELKSAKNTEDLENDEELENTKKFLYLTSKSAGTAAEPLHCKFEDDLFSVFHTQIPQETYENHTEKDFTCDVEKNGPLIKTEKQPFSNTEAIEPRSEHSQVFIIRNAEHSQDFIKRNIELAKSSRSPVVMVEGEKKRLDELLKGLEDTDSGLSSSEGDQCAWLVPGEGYTLAATESQQLAEIDIKLQELSVDSPAVFSLESQSNKGDMEHDSNEERNTEPTPGEKILRDNKEQRDRESRLRAIDGKLKEINEQVEECPVITPGKRNERITWRWLLAKILEPECKV.

The tract at residues 1–111 is disordered; it reads MSMDIIKGNL…PEHSDDPKLE (111 aa). Over residues 18-32 the composition is skewed to low complexity; the sequence is SSSRSRPGSRSSNGS. The span at 53 to 72 shows a compositional bias: basic and acidic residues; that stretch reads SGKEGHTSDSRVEERRKISD. Residues Ser-71, Ser-88, and Ser-89 each carry the phosphoserine modification. Residues 131 to 157 adopt a coiled-coil conformation; that stretch reads LAKRRIREKEIKKQGLEMRIKLWEELK. Positions 354–390 are disordered; it reads SQSNKGDMEHDSNEERNTEPTPGEKILRDNKEQRDRE. Composition is skewed to basic and acidic residues over residues 359-371 and 378-390; these read GDMEHDSNEERNT and KILRDNKEQRDRE.

It belongs to the FSIP1 family.

The protein is Fibrous sheath-interacting protein 1 (Fsip1) of Rattus norvegicus (Rat).